The following is a 380-amino-acid chain: Glycogenin-2 (380 aa).

Positions 10, 16, and 95 each coordinate UDP. Positions 10, 16, 95, 104, 120, 121, 122, 158, 159, 185, 188, and 189 each coordinate UDP-alpha-D-glucose. UDP is bound by residues aspartate 120, alanine 121, and aspartate 122. Aspartate 120 contributes to the Mn(2+) binding site. Position 122 (aspartate 122) interacts with Mn(2+). Tyrosine 230 and tyrosine 232 each carry an O-linked (Glc...) tyrosine glycan. UDP-binding residues include histidine 249, glycine 252, and lysine 255. Histidine 249 lines the Mn(2+) pocket. The UDP-alpha-D-glucose site is built by glycine 252 and lysine 255. The segment at 331–357 (SVDRNASQKSTAEKHDIEKPTSKPQSA) is disordered. The span at 341–351 (TAEKHDIEKPT) shows a compositional bias: basic and acidic residues. An O-linked (Glc...) tyrosine glycan is attached at tyrosine 367.

This sequence belongs to the glycosyltransferase 8 family. Glycogenin subfamily. In terms of assembly, interacts with glycogen synthase GSY2. It depends on Mn(2+) as a cofactor.

It localises to the cytoplasm. The protein resides in the vacuole. It carries out the reaction L-tyrosyl-[glycogenin] + UDP-alpha-D-glucose = alpha-D-glucosyl-L-tyrosyl-[glycogenin] + UDP + H(+). It catalyses the reaction [1,4-alpha-D-glucosyl](n)-L-tyrosyl-[glycogenin] + UDP-alpha-D-glucose = [1,4-alpha-D-glucosyl](n+1)-L-tyrosyl-[glycogenin] + UDP + H(+). Its function is as follows. Self-glucosylating initiator of glycogen synthesis. It catalyzes the formation of a short alpha (1,4)-glucosyl chain covalently attached via a glucose 1-O-tyrosyl linkage to internal tyrosine residues and these chains act as primers for the elongation reaction catalyzed by glycogen synthase. Capable of transferring glucosyl residues to unbound acceptors such as free oligoglucans or oligoglucan derivatives. The protein is Glycogenin-2 (GLG2) of Saccharomyces cerevisiae (strain YJM789) (Baker's yeast).